Here is a 564-residue protein sequence, read N- to C-terminus: Formate--tetrahydrofolate ligase (564 aa).

Threonine 65–threonine 72 lines the ATP pocket.

This sequence belongs to the formate--tetrahydrofolate ligase family.

It carries out the reaction (6S)-5,6,7,8-tetrahydrofolate + formate + ATP = (6R)-10-formyltetrahydrofolate + ADP + phosphate. Its pathway is one-carbon metabolism; tetrahydrofolate interconversion. This is Formate--tetrahydrofolate ligase from Roseiflexus sp. (strain RS-1).